Here is a 947-residue protein sequence, read N- to C-terminus: Isoleucine--tRNA ligase (947 aa).

Positions 57 to 67 (PYANGNIHLGH) match the 'HIGH' region motif. Glutamate 568 provides a ligand contact to L-isoleucyl-5'-AMP. The 'KMSKS' region motif lies at 609-613 (KMSKS). Lysine 612 is a binding site for ATP. The Zn(2+) site is built by cysteine 908, cysteine 911, cysteine 926, and cysteine 929.

Belongs to the class-I aminoacyl-tRNA synthetase family. IleS type 1 subfamily. In terms of assembly, monomer. Zn(2+) serves as cofactor.

It is found in the cytoplasm. It catalyses the reaction tRNA(Ile) + L-isoleucine + ATP = L-isoleucyl-tRNA(Ile) + AMP + diphosphate. Functionally, catalyzes the attachment of isoleucine to tRNA(Ile). As IleRS can inadvertently accommodate and process structurally similar amino acids such as valine, to avoid such errors it has two additional distinct tRNA(Ile)-dependent editing activities. One activity is designated as 'pretransfer' editing and involves the hydrolysis of activated Val-AMP. The other activity is designated 'posttransfer' editing and involves deacylation of mischarged Val-tRNA(Ile). This chain is Isoleucine--tRNA ligase, found in Persephonella marina (strain DSM 14350 / EX-H1).